Consider the following 407-residue polypeptide: uncharacterized protein (407 aa).

Disordered regions lie at residues 1-64 (MSRK…EPFD), 110-276 (GFGP…YPQF), and 314-341 (QSRPRKSSHDRHKHHNKHKHHNGHHNNP). Polar residues predominate over residues 7–32 (KQSNPKRNYKNDNYFQENSYTMTNGF). The span at 33–44 (TKDKDGKPVEFK) shows a compositional bias: basic and acidic residues. Residues 122 to 137 (DSDSEYSDECLTDECS) are compositionally biased toward acidic residues. Polar residues-rich tracts occupy residues 138–147 (DNYNKQSTDS) and 184–201 (NFDNTVPIPQNDTTNSQP). The segment covering 209 to 231 (SKSSSKSSKSNKSNKSSKSNKSS) has biased composition (low complexity). A compositionally biased stretch (basic residues) spans 232-246 (KSSKSKSNKHSKHKN). The span at 247–258 (KSDSSSDSDEKT) shows a compositional bias: basic and acidic residues. Composition is skewed to basic residues over residues 259-270 (HKHKDRRHRRGR) and 316-341 (RPRKSSHDRHKHHNKHKHHNGHHNNP).

This is an uncharacterized protein from Acanthamoeba polyphaga mimivirus (APMV).